We begin with the raw amino-acid sequence, 130 residues long: Small ribosomal subunit protein uS8 (130 aa).

This sequence belongs to the universal ribosomal protein uS8 family. As to quaternary structure, part of the 30S ribosomal subunit. Contacts proteins S5 and S12.

Its function is as follows. One of the primary rRNA binding proteins, it binds directly to 16S rRNA central domain where it helps coordinate assembly of the platform of the 30S subunit. In Shewanella halifaxensis (strain HAW-EB4), this protein is Small ribosomal subunit protein uS8.